The chain runs to 268 residues: Phosphatidylglycerol--prolipoprotein diacylglyceryl transferase (268 aa).

4 consecutive transmembrane segments (helical) span residues 14-34, 57-77, 90-110, and 117-137; these read LGPI…FAGW, LTFY…IIFY, FFLW…LIAF, and IGAN…IGLG. R140 provides a ligand contact to a 1,2-diacyl-sn-glycero-3-phospho-(1'-sn-glycerol). Helical transmembrane passes span 174–194, 200–220, and 240–260; these read QLFE…LVTI, YLVL…CEFF, and ILSI…FIKI.

This sequence belongs to the Lgt family.

It localises to the cell inner membrane. It catalyses the reaction L-cysteinyl-[prolipoprotein] + a 1,2-diacyl-sn-glycero-3-phospho-(1'-sn-glycerol) = an S-1,2-diacyl-sn-glyceryl-L-cysteinyl-[prolipoprotein] + sn-glycerol 1-phosphate + H(+). It functions in the pathway protein modification; lipoprotein biosynthesis (diacylglyceryl transfer). Functionally, catalyzes the transfer of the diacylglyceryl group from phosphatidylglycerol to the sulfhydryl group of the N-terminal cysteine of a prolipoprotein, the first step in the formation of mature lipoproteins. The sequence is that of Phosphatidylglycerol--prolipoprotein diacylglyceryl transferase from Francisella tularensis subsp. tularensis (strain FSC 198).